A 1464-amino-acid polypeptide reads, in one-letter code: Collagen alpha-1(I) chain (1464 aa).

The first 22 residues, 1–22, serve as a signal peptide directing secretion; it reads MFSFVDLRLLLLLAATALLTHG. A propeptide spans 23 to 161 (N-terminal propeptide); sequence QEEGQVEGQD…PPGLGGNFAP (139 aa). The region spanning 38-96 is the VWFC domain; that stretch reads ITCVQNGLRYHDRDVWKPEPCRICVCDNGKVLCDDVICDETKNCPGAEVPEGECCPVCP. The disordered stretch occupies residues 98 to 1214; that stretch reads GSESPTDQET…PQEKAHDGGR (1117 aa). The segment covering 138–153 has biased composition (pro residues); the sequence is PGLPGPPGPPGPPGPP. Pyrrolidone carboxylic acid is present on Gln162. The interval 162–178 is nonhelical region (N-terminal); it reads QLSYGYDEKSTGGISVP. Lys170 carries the allysine modification. Ser171 bears the Phosphoserine mark. The segment at 179–1192 is triple-helical region; it reads GPMGPSGPRG…PGPPGPPGPP (1014 aa). Pro190, Pro193, Pro196, Pro205, Pro208, Pro211, Pro226, Pro241, Pro247, Pro256, and Pro262 each carry 4-hydroxyproline. The span at 198–217 shows a compositional bias: low complexity; sequence PQGFQGPPGEPGEPGASGPM. Positions 229–243 are enriched in basic and acidic residues; sequence NGDDGEAGKPGRPGE. Residue Lys265 is modified to 5-hydroxylysine; alternate. The O-linked (Gal...) hydroxylysine; alternate glycan is linked to Lys265. Ser271 is subject to Phosphoserine. Residues 279–295 show a composition bias toward low complexity; that stretch reads DAGPAGPKGEPGSPGEN. 4-hydroxyproline occurs at positions 289, 292, 298, 307, and 313. Over residues 318-331 the composition is skewed to low complexity; sequence PAGARGNDGATGAA. Residues 333–345 show a composition bias toward pro residues; it reads PPGPTGPAGPPGF. Residues Pro334, Pro343, Pro346, Pro373, Pro376, Pro388, Pro394, Pro403, Pro409, Pro412, and Pro427 each carry the 4-hydroxyproline modification. Positions 379–418 are enriched in low complexity; that stretch reads AGAAGPAGNPGADGQPGAKGANGAPGIAGAPGFPGARGPS. Position 430 is a 5-hydroxylysine (Lys430). Residues Pro436, Pro439, Pro451, Pro460, Pro475, Pro481, Pro490, and Pro496 each carry the 4-hydroxyproline modification. Residues 448 to 457 show a composition bias toward low complexity; it reads KGEPGPVGVQ. Residues 485 to 494 show a composition bias toward gly residues; the sequence is GERGGPGSRG. A 5-hydroxylysine modification is found at Lys505. Pro514, Pro523, Pro529, Pro535, Pro544, Pro547, Pro556, Pro565, Pro571, Pro583, Pro592, Pro601, Pro604, Pro622, Pro640, Pro646, Pro652, Pro658, Pro664, Pro670, Pro682, Pro691, Pro703, Pro715, Pro718, Pro724, Pro730, and Pro739 each carry 4-hydroxyproline. The segment covering 538 to 564 has biased composition (low complexity); sequence KGLTGSPGSPGPDGKTGPPGPAGQDGR. A compositionally biased stretch (low complexity) spans 573 to 592; the sequence is ARGQAGVMGFPGPKGAAGEP. Positions 634–661 are enriched in low complexity; that stretch reads QGPAGSPGFQGLPGPAGPPGEAGKPGEQ. A compositionally biased stretch (low complexity) spans 696 to 724; that stretch reads PRGANGAPGNDGAKGDAGAPGAPGSQGAP. A Cell attachment site motif is present at residues 745-747; that stretch reads RGD. Lys751 is modified (5-hydroxylysine). 4-hydroxyproline occurs at positions 757, 772, and 778. Over residues 784 to 798 the composition is skewed to low complexity; sequence SGPSGPAGPTGARGA. Ser787 bears the Phosphoserine mark. A 4-hydroxyproline mark is found at Pro799, Pro805, Pro808, Pro817, Pro823, Pro841, Pro850, and Pro859. Residues 811-838 are compositionally biased toward low complexity; the sequence is AGFAGPPGADGQPGAKGEPGDAGAKGDA. The segment covering 840–852 has biased composition (pro residues); it reads PPGPAGPAGPPGP. Positions 853–883 are enriched in low complexity; the sequence is IGNVGAPGAKGARGSAGPPGATGFPGAAGRV. 5-hydroxylysine is present on Lys862. 4-hydroxyproline occurs at positions 871 and 877. The residue at position 885 (Pro885) is a 3-hydroxyproline. 4-hydroxyproline is present on residues Pro886, Pro895, Pro898, Pro919, Pro928, Pro937, Pro946, Pro964, Pro973, Pro976, Pro982, Pro997, Pro1003, Pro1009, Pro1018, and Pro1024. A compositionally biased stretch (low complexity) spans 912-921; that stretch reads ETGPAGRPGE. Positions 931 to 955 are enriched in low complexity; it reads AGEKGSPGADGPAGAPGTPGPQGIA. Over residues 996–1006 the composition is skewed to pro residues; the sequence is PPGPMGPPGLA. Lys1033 is subject to 5-hydroxylysine. The segment covering 1042–1057 has biased composition (pro residues); sequence AGPPGAPGAPGAPGPV. 4-hydroxyproline occurs at positions 1045, 1048, and 1051. A compositionally biased stretch (low complexity) spans 1078-1092; it reads VGPVGARGPAGPQGP. The short motif at 1093 to 1095 is the Cell attachment site element; it reads RGD. Residues 1093–1107 are compositionally biased toward basic and acidic residues; that stretch reads RGDKGETGEQGDRGI. Lys1096 bears the 5-hydroxylysine mark. Residue Lys1108 is modified to 5-hydroxylysine; alternate. O-linked (Gal...) hydroxylysine; alternate glycosylation occurs at Lys1108. 4-hydroxyproline is present on residues Pro1120, Pro1123, Pro1126, Pro1144, and Pro1159. Residues 1126 to 1159 are compositionally biased toward low complexity; sequence PGEQGPSGASGPAGPRGPPGSAGAPGKDGLNGLP. Pro1164 is subject to 3-hydroxyproline. Residue Pro1165 is modified to 4-hydroxyproline. Positions 1177-1192 are enriched in pro residues; that stretch reads VGPPGPPGPPGPPGPP. Pro1179 is subject to 3-hydroxyproline. 4-hydroxyproline is present on Pro1180. At Pro1182 the chain carries 3-hydroxyproline. Pro1183 is modified (4-hydroxyproline). Pro1185 bears the 3-hydroxyproline mark. 4-hydroxyproline is present on residues Pro1186, Pro1189, and Pro1192. Residues 1193 to 1218 form a nonhelical region (C-terminal) region; the sequence is SAGFDFSFLPQPPQEKAHDGGRYYRA. Position 1208 is an allysine (Lys1208). Positions 1219–1464 are cleaved as a propeptide — C-terminal propeptide; sequence DDANVVRDRD…GFDVGPVCFL (246 aa). The Fibrillar collagen NC1 domain occupies 1229–1464; that stretch reads LEVDTTLKSL…GFDVGPVCFL (236 aa). Cystine bridges form between Cys1259–Cys1291, Cys1299–Cys1462, and Cys1370–Cys1415. Ca(2+) is bound by residues Asp1277, Asn1279, Gln1280, Cys1282, and Asp1285. N-linked (GlcNAc...) asparagine glycosylation is present at Asn1365.

The protein belongs to the fibrillar collagen family. Trimers of one alpha 2(I) and two alpha 1(I) chains. Interacts with MRC2. Interacts with TRAM2. Interacts with MFAP4 in a Ca (2+)-dependent manner. Post-translationally, contains mostly 4-hydroxyproline. Proline residues at the third position of the tripeptide repeating unit (G-X-Y) are hydroxylated in some or all of the chains. In terms of processing, contains 3-hydroxyproline at a few sites. This modification occurs on the first proline residue in the sequence motif Gly-Pro-Hyp, where Hyp is 4-hydroxyproline. Lysine residues at the third position of the tripeptide repeating unit (G-X-Y) are 5-hydroxylated in some or all of the chains. Post-translationally, O-glycosylated on hydroxylated lysine residues. The O-linked glycan consists of a Glc-Gal disaccharide. As to expression, forms the fibrils of tendon, ligaments and bones. In bones the fibrils are mineralized with calcium hydroxyapatite.

The protein resides in the secreted. Its subcellular location is the extracellular space. It localises to the extracellular matrix. Functionally, type I collagen is a member of group I collagen (fibrillar forming collagen). The protein is Collagen alpha-1(I) chain (COL1A1) of Homo sapiens (Human).